Here is a 334-residue protein sequence, read N- to C-terminus: Holliday junction branch migration complex subunit RuvB (334 aa).

Positions 4 to 186 are large ATPase domain (RuvB-L); it reads ADRLIAPENP…FGITQRLEYY (183 aa). ATP-binding positions include Ile25, Arg26, Gly67, Lys70, Thr71, Thr72, 133–135, Arg176, Tyr186, and Arg223; that span reads EDY. Thr71 lines the Mg(2+) pocket. The tract at residues 187–257 is small ATPAse domain (RuvB-S); it reads KVQDLQNIVQ…VADKALNMLD (71 aa). The segment at 260–334 is head domain (RuvB-H); sequence AQGFDYMDRK…RAYLHFGIEK (75 aa). Residues Arg315 and Arg320 each coordinate DNA.

It belongs to the RuvB family. Homohexamer. Forms an RuvA(8)-RuvB(12)-Holliday junction (HJ) complex. HJ DNA is sandwiched between 2 RuvA tetramers; dsDNA enters through RuvA and exits via RuvB. An RuvB hexamer assembles on each DNA strand where it exits the tetramer. Each RuvB hexamer is contacted by two RuvA subunits (via domain III) on 2 adjacent RuvB subunits; this complex drives branch migration. In the full resolvosome a probable DNA-RuvA(4)-RuvB(12)-RuvC(2) complex forms which resolves the HJ.

Its subcellular location is the cytoplasm. The catalysed reaction is ATP + H2O = ADP + phosphate + H(+). In terms of biological role, the RuvA-RuvB-RuvC complex processes Holliday junction (HJ) DNA during genetic recombination and DNA repair, while the RuvA-RuvB complex plays an important role in the rescue of blocked DNA replication forks via replication fork reversal (RFR). RuvA specifically binds to HJ cruciform DNA, conferring on it an open structure. The RuvB hexamer acts as an ATP-dependent pump, pulling dsDNA into and through the RuvAB complex. RuvB forms 2 homohexamers on either side of HJ DNA bound by 1 or 2 RuvA tetramers; 4 subunits per hexamer contact DNA at a time. Coordinated motions by a converter formed by DNA-disengaged RuvB subunits stimulates ATP hydrolysis and nucleotide exchange. Immobilization of the converter enables RuvB to convert the ATP-contained energy into a lever motion, pulling 2 nucleotides of DNA out of the RuvA tetramer per ATP hydrolyzed, thus driving DNA branch migration. The RuvB motors rotate together with the DNA substrate, which together with the progressing nucleotide cycle form the mechanistic basis for DNA recombination by continuous HJ branch migration. Branch migration allows RuvC to scan DNA until it finds its consensus sequence, where it cleaves and resolves cruciform DNA. This is Holliday junction branch migration complex subunit RuvB from Vibrio parahaemolyticus serotype O3:K6 (strain RIMD 2210633).